Consider the following 418-residue polypeptide: Putative ion-transport protein YfeO (418 aa).

10 helical membrane passes run 15–37, 57–79, 99–118, 149–171, 186–208, 221–243, 258–280, 301–323, 343–363, and 376–398; these read PAVA…ASVL, LWII…FSQG, ALPR…VSLG, ILAS…LIFS, LFAP…HPHF, TDIL…AVWC, VLVL…PVSL, YFLL…FRGG, VPAV…VLVV, and VVVP…WLLL.

This sequence belongs to the chloride channel (TC 2.A.49) family.

It localises to the cell membrane. The sequence is that of Putative ion-transport protein YfeO (yfeO) from Shigella flexneri.